Reading from the N-terminus, the 259-residue chain is Thiazole synthase (259 aa).

Lys-95 functions as the Schiff-base intermediate with DXP in the catalytic mechanism. Residues Gly-156, Ala-182 to Gly-183, and Asn-204 to Thr-205 contribute to the 1-deoxy-D-xylulose 5-phosphate site.

Belongs to the ThiG family. Homotetramer. Forms heterodimers with either ThiH or ThiS.

The protein localises to the cytoplasm. It carries out the reaction [ThiS sulfur-carrier protein]-C-terminal-Gly-aminoethanethioate + 2-iminoacetate + 1-deoxy-D-xylulose 5-phosphate = [ThiS sulfur-carrier protein]-C-terminal Gly-Gly + 2-[(2R,5Z)-2-carboxy-4-methylthiazol-5(2H)-ylidene]ethyl phosphate + 2 H2O + H(+). The protein operates within cofactor biosynthesis; thiamine diphosphate biosynthesis. In terms of biological role, catalyzes the rearrangement of 1-deoxy-D-xylulose 5-phosphate (DXP) to produce the thiazole phosphate moiety of thiamine. Sulfur is provided by the thiocarboxylate moiety of the carrier protein ThiS. In vitro, sulfur can be provided by H(2)S. This is Thiazole synthase from Proteus mirabilis (strain HI4320).